The chain runs to 175 residues: MMPPRLRILGIDPGLRNMGWGIVELLGSNLTYVASGVVHSDGKGELAHRLKDLHVGLAGVIDAYTPHEAAIEETFVNRDPQSTLKLGQARGIALVVPALADLAVAEYAANLIKKTVTGNGHAEKQQVAMMVKILLPKSDAGSADAVDALAVAITHAQLRRNPAALKSQAMIGQGR.

Active-site residues include Asp-12, Glu-72, and Asp-144. Mg(2+) contacts are provided by Asp-12, Glu-72, and Asp-144.

Belongs to the RuvC family. In terms of assembly, homodimer which binds Holliday junction (HJ) DNA. The HJ becomes 2-fold symmetrical on binding to RuvC with unstacked arms; it has a different conformation from HJ DNA in complex with RuvA. In the full resolvosome a probable DNA-RuvA(4)-RuvB(12)-RuvC(2) complex forms which resolves the HJ. Requires Mg(2+) as cofactor.

The protein localises to the cytoplasm. It carries out the reaction Endonucleolytic cleavage at a junction such as a reciprocal single-stranded crossover between two homologous DNA duplexes (Holliday junction).. In terms of biological role, the RuvA-RuvB-RuvC complex processes Holliday junction (HJ) DNA during genetic recombination and DNA repair. Endonuclease that resolves HJ intermediates. Cleaves cruciform DNA by making single-stranded nicks across the HJ at symmetrical positions within the homologous arms, yielding a 5'-phosphate and a 3'-hydroxyl group; requires a central core of homology in the junction. The consensus cleavage sequence is 5'-(A/T)TT(C/G)-3'. Cleavage occurs on the 3'-side of the TT dinucleotide at the point of strand exchange. HJ branch migration catalyzed by RuvA-RuvB allows RuvC to scan DNA until it finds its consensus sequence, where it cleaves and resolves the cruciform DNA. This Beijerinckia indica subsp. indica (strain ATCC 9039 / DSM 1715 / NCIMB 8712) protein is Crossover junction endodeoxyribonuclease RuvC.